We begin with the raw amino-acid sequence, 178 residues long: Inner membrane-spanning protein YciB (178 aa).

A run of 6 helical transmembrane segments spans residues 1–21, 23–43, 51–71, 77–97, 120–140, and 150–170; these read MKIL…KMTG, IIIA…FTWF, MHLV…LLGD, WKPT…QFIG, LNLA…YVAF, and FKLF…GIYL.

It belongs to the YciB family.

The protein localises to the cell inner membrane. Functionally, plays a role in cell envelope biogenesis, maintenance of cell envelope integrity and membrane homeostasis. The chain is Inner membrane-spanning protein YciB from Marinomonas sp. (strain MWYL1).